The chain runs to 199 residues: Recombination protein RecR (199 aa).

The C4-type zinc finger occupies 58-73 (CKKCFNFTSEDECEIC). The region spanning 81–175 (KLICVVAETK…KVTRIAYGLP (95 aa)) is the Toprim domain.

The protein belongs to the RecR family.

Its function is as follows. May play a role in DNA repair. It seems to be involved in an RecBC-independent recombinational process of DNA repair. It may act with RecF and RecO. This chain is Recombination protein RecR, found in Prochlorococcus marinus (strain MIT 9312).